We begin with the raw amino-acid sequence, 132 residues long: Small ribosomal subunit protein uS8 (132 aa).

It belongs to the universal ribosomal protein uS8 family. In terms of assembly, part of the 30S ribosomal subunit. Contacts proteins S5 and S12.

Functionally, one of the primary rRNA binding proteins, it binds directly to 16S rRNA central domain where it helps coordinate assembly of the platform of the 30S subunit. The chain is Small ribosomal subunit protein uS8 from Allorhizobium ampelinum (strain ATCC BAA-846 / DSM 112012 / S4) (Agrobacterium vitis (strain S4)).